The primary structure comprises 283 residues: Phosphatidylserine decarboxylase proenzyme (283 aa).

Residues Asp-88, His-145, and Ser-248 each act as charge relay system; for autoendoproteolytic cleavage activity in the active site. Ser-248 (schiff-base intermediate with substrate; via pyruvic acid; for decarboxylase activity) is an active-site residue. Ser-248 is modified (pyruvic acid (Ser); by autocatalysis).

This sequence belongs to the phosphatidylserine decarboxylase family. PSD-B subfamily. Prokaryotic type I sub-subfamily. Heterodimer of a large membrane-associated beta subunit and a small pyruvoyl-containing alpha subunit. Pyruvate serves as cofactor. Post-translationally, is synthesized initially as an inactive proenzyme. Formation of the active enzyme involves a self-maturation process in which the active site pyruvoyl group is generated from an internal serine residue via an autocatalytic post-translational modification. Two non-identical subunits are generated from the proenzyme in this reaction, and the pyruvate is formed at the N-terminus of the alpha chain, which is derived from the carboxyl end of the proenzyme. The autoendoproteolytic cleavage occurs by a canonical serine protease mechanism, in which the side chain hydroxyl group of the serine supplies its oxygen atom to form the C-terminus of the beta chain, while the remainder of the serine residue undergoes an oxidative deamination to produce ammonia and the pyruvoyl prosthetic group on the alpha chain. During this reaction, the Ser that is part of the protease active site of the proenzyme becomes the pyruvoyl prosthetic group, which constitutes an essential element of the active site of the mature decarboxylase.

The protein localises to the cell membrane. It catalyses the reaction a 1,2-diacyl-sn-glycero-3-phospho-L-serine + H(+) = a 1,2-diacyl-sn-glycero-3-phosphoethanolamine + CO2. It functions in the pathway phospholipid metabolism; phosphatidylethanolamine biosynthesis; phosphatidylethanolamine from CDP-diacylglycerol: step 2/2. Catalyzes the formation of phosphatidylethanolamine (PtdEtn) from phosphatidylserine (PtdSer). In Acidovorax ebreus (strain TPSY) (Diaphorobacter sp. (strain TPSY)), this protein is Phosphatidylserine decarboxylase proenzyme.